Consider the following 77-residue polypeptide: Sec-independent protein translocase protein TatA (77 aa).

The helical transmembrane segment at 1–21 threads the bilayer; the sequence is MGSFSIWHWLVVGILVLLLFG. Positions 41–77 are disordered; the sequence is KGMSEDDAPTPAPKQIDAQRAPDLSATPTPTAETENR. Over residues 66–77 the composition is skewed to polar residues; sequence ATPTPTAETENR.

This sequence belongs to the TatA/E family. As to quaternary structure, the Tat system comprises two distinct complexes: a TatABC complex, containing multiple copies of TatA, TatB and TatC subunits, and a separate TatA complex, containing only TatA subunits. Substrates initially bind to the TatABC complex, which probably triggers association of the separate TatA complex to form the active translocon.

The protein localises to the cell inner membrane. Functionally, part of the twin-arginine translocation (Tat) system that transports large folded proteins containing a characteristic twin-arginine motif in their signal peptide across membranes. TatA could form the protein-conducting channel of the Tat system. This is Sec-independent protein translocase protein TatA from Sphingopyxis alaskensis (strain DSM 13593 / LMG 18877 / RB2256) (Sphingomonas alaskensis).